Consider the following 324-residue polypeptide: Methyltransferase pytC (324 aa).

It belongs to the methyltransferase superfamily. LaeA methyltransferase family.

It functions in the pathway secondary metabolite biosynthesis. In terms of biological role, methyltransferase; part of the gene cluster that mediates the biosynthesis of pyranterreones, a family of antioxidative compounds. The first step of pyranonigrins biosynthesis is performed by the hybrid PKS-NRPS synthetase pytA that condenses 4 malonyl-CoA units ato the acetyl starter unit by the modular PKS of pytA. The acyl chain is then connected to an L-serine through the amide bond by the modular NRPS of pytA. A tetramic acid is formed and released from the PKS-NRPS pytA to give pyranterreone 5 with the help of the thioesterase pytI. Pyranterreone 5 could be methylated by pytC to afford pyranterreone 6. Both pyranterreones 5 and 6 are subsequently oxidized by the FAD-linked oxidoreductase pytB and the cytochrome P450 monooxygenase pytD to form the fused gamma-pyrone core, resulting in pyranterreones 7 and 11, respectively. The hydroxy group at C-8 of pyranterreones 7 and 11 are dehydrated by the aspartyl protease pytH to form a delta-7 double bond to give pyranterreones 3 and 1, 2 accordingly. The exo-methylene of pyranterreone 3 could be reduced into a pendant methyl by reductase pytE to provide pyranterreone 4, also known as cordylactam. Pyranterreone 4 can be reconverted to pyranterreone 3 through pytB-catalyzed dehydrogenation or further oxidized to pyranterreones 9 and 10. The sequence is that of Methyltransferase pytC from Aspergillus terreus (strain NIH 2624 / FGSC A1156).